Here is a 501-residue protein sequence, read N- to C-terminus: Aspartate--tRNA ligase, cytoplasmic (501 aa).

The residue at position 52 (T52) is a Phosphothreonine. K74 is subject to N6-acetyllysine. Residue E229 participates in L-aspartate binding. S249 is modified (phosphoserine). The interval 251–254 is aspartate; it reads QLYK. R273 serves as a coordination point for L-aspartate. ATP-binding positions include 273 to 275 and 281 to 283; these read RAE and RHL. At K374 the chain carries N6-acetyllysine. E424 contributes to the ATP binding site. L-aspartate-binding residues include S427 and R431. 472–475 is a binding site for ATP; it reads GLER.

The protein belongs to the class-II aminoacyl-tRNA synthetase family. Type 2 subfamily. In terms of assembly, homodimer. Part of a multisubunit complex that groups tRNA ligases for Arg (RARS1), Asp (DARS1), Gln (QARS1), Ile (IARS1), Leu (LARS1), Lys (KARS1), Met (MARS1) the bifunctional ligase for Glu and Pro (EPRS1) and the auxiliary subunits AIMP1/p43, AIMP2/p38 and EEF1E1/p18.

Its subcellular location is the cytoplasm. The catalysed reaction is tRNA(Asp) + L-aspartate + ATP = L-aspartyl-tRNA(Asp) + AMP + diphosphate. In terms of biological role, catalyzes the specific attachment of an amino acid to its cognate tRNA in a 2 step reaction: the amino acid (AA) is first activated by ATP to form AA-AMP and then transferred to the acceptor end of the tRNA. This is Aspartate--tRNA ligase, cytoplasmic (Dars1) from Mus musculus (Mouse).